Here is a 211-residue protein sequence, read N- to C-terminus: MDAVILNLLGDIPLVTRLWTIGCLVLSGLTSLRIVDPGKVVYSYDLVFKKGQYGRLLYSIFDYGAFNWISMINIFVSANHLSTLENSFNLRRKFCWIIFLLLVILVKMTSIEQPAASLGVLLHENLVYYELKKNGNQMNVRFFGAIDVSPSIFPIYMNAVMYFVYKRSWLEIAMNFMPGHVIYYMDDIIGKIYGIDLCKSPYDWFRNTETP.

Met-1 bears the N-acetylmethionine mark. Residues 1–14 (MDAVILNLLGDIPL) are Cytoplasmic-facing. A helical membrane pass occupies residues 15 to 32 (VTRLWTIGCLVLSGLTSL). Over 33–67 (RIVDPGKVVYSYDLVFKKGQYGRLLYSIFDYGAFN) the chain is Lumenal. Residues 68–85 (WISMINIFVSANHLSTLE) form a helical membrane-spanning segment. Topologically, residues 86-92 (NSFNLRR) are cytoplasmic. The helical transmembrane segment at 93–109 (KFCWIIFLLLVILVKMT) threads the bilayer. The Lumenal segment spans residues 110–117 (SIEQPAAS). A helical transmembrane segment spans residues 118 to 133 (LGVLLHENLVYYELKK). Over 134–149 (NGNQMNVRFFGAIDVS) the chain is Cytoplasmic. A helical membrane pass occupies residues 150-165 (PSIFPIYMNAVMYFVY). Over 166-168 (KRS) the chain is Lumenal. The helical transmembrane segment at 169–189 (WLEIAMNFMPGHVIYYMDDII) threads the bilayer. The Cytoplasmic segment spans residues 190-211 (GKIYGIDLCKSPYDWFRNTETP).

The protein belongs to the derlin family. As to quaternary structure, component of the HRD1 ubiquitin ligase complex which contains the E3 ligase HRD1, its cofactors HRD3, USA1 and DER1, substrate recruiting factor YOS9 and CDC48-binding protein UBX2. Within the complex, interacts with USA1 (via C-terminus). In ERAD-L, HRD3 and YOS9 jointly bind misfolded glycoproteins in the endoplasmic reticulum (ER) lumen. Movement of ERAD-L substrates through the ER membrane is facilitated by HRD1 and DER1 which have lateral gates facing each other and which distort the membrane region between the lateral gates, making it much thinner than a normal phospholipid bilayer. Substrates insert into the membrane as a hairpin loop with one strand interacting with DER1 and the other with HRD1. The HRD1 complex interacts with the heterotrimeric CDC48-NPL4-UFD1 ATPase complex which is recruited by UBX2 via its interaction with CDC48 and which moves ubiquitinated substrates to the cytosol for targeting to the proteasome. N-terminally acetylated by acetyltransferase NatB which enhances DER1 stability and is required for ERAD-L function.

Its subcellular location is the endoplasmic reticulum membrane. Component of the endoplasmic reticulum-associated degradation (ERAD) pathway. Specifically required for the ERAD-L pathway which mediates the degradation of proteins with misfolded lumenal domains within the endoplasmic reticulum (ER). Facilitates retrotranslocation of misfolded proteins from the ER lumen through the ER membrane in conjunction with HRD1. Both proteins have lateral gates facing each other and distort the membrane region between the lateral gates, making it much thinner than a normal phospholipid bilayer. Substrates insert into the membrane as a hairpin loop with one strand interacting with DER1 and the other with HRD1. The chain is Degradation in the endoplasmic reticulum protein 1 (DER1) from Saccharomyces cerevisiae (strain ATCC 204508 / S288c) (Baker's yeast).